Consider the following 804-residue polypeptide: Phenylalanine--tRNA ligase beta subunit (804 aa).

Residues 39–155 enclose the tRNA-binding domain; that stretch reads EEGLKKLVVG…ADVKPGQDVY (117 aa). Positions 408–483 constitute a B5 domain; the sequence is REPVVVKTTV…RIYGYDNLKS (76 aa). Aspartate 461, aspartate 467, glutamate 470, and glutamate 471 together coordinate Mg(2+). The FDX-ACB domain maps to 711–804; sequence PKFPAIERDL…LENDLDIKVR (94 aa).

Belongs to the phenylalanyl-tRNA synthetase beta subunit family. Type 1 subfamily. As to quaternary structure, tetramer of two alpha and two beta subunits. Mg(2+) serves as cofactor.

It is found in the cytoplasm. The catalysed reaction is tRNA(Phe) + L-phenylalanine + ATP = L-phenylalanyl-tRNA(Phe) + AMP + diphosphate + H(+). The sequence is that of Phenylalanine--tRNA ligase beta subunit from Lactobacillus acidophilus (strain ATCC 700396 / NCK56 / N2 / NCFM).